The primary structure comprises 525 residues: Glutathione hydrolase-like YwrD proenzyme (525 aa).

Thr-339 acts as the Nucleophile in catalysis.

Belongs to the gamma-glutamyltransferase family. This enzyme consists of two polypeptide chains, which are synthesized from a single polypeptide. Post-translationally, cleaved by autocatalysis into a large and a small subunit.

The enzyme catalyses an N-terminal (5-L-glutamyl)-[peptide] + an alpha-amino acid = 5-L-glutamyl amino acid + an N-terminal L-alpha-aminoacyl-[peptide]. It carries out the reaction glutathione + H2O = L-cysteinylglycine + L-glutamate. It catalyses the reaction an S-substituted glutathione + H2O = an S-substituted L-cysteinylglycine + L-glutamate. In terms of biological role, overexpressed protein with an N-terminal His tag has been reported not to hydrolyze glutathione; it is not clear if the construct is processed to 2 subunits. The sequence is that of Glutathione hydrolase-like YwrD proenzyme (ywrD) from Bacillus subtilis (strain 168).